The following is a 103-amino-acid chain: Large ribosomal subunit protein bL21 (103 aa).

Belongs to the bacterial ribosomal protein bL21 family. Part of the 50S ribosomal subunit. Contacts protein L20.

This protein binds to 23S rRNA in the presence of protein L20. In Cupriavidus necator (strain ATCC 17699 / DSM 428 / KCTC 22496 / NCIMB 10442 / H16 / Stanier 337) (Ralstonia eutropha), this protein is Large ribosomal subunit protein bL21.